Here is a 675-residue protein sequence, read N- to C-terminus: Rho GTPase-activating protein 40 (675 aa).

Disordered regions lie at residues 95–118 (RDEL…EAES) and 187–218 (KMSS…PGGL). The span at 103 to 116 (SGGNEGQLPEEGEA) shows a compositional bias: acidic residues. One can recognise a Rho-GAP domain in the interval 323 to 522 (VPLDSLLEAD…IMVHYQDLLW (200 aa)).

Functionally, GTPase activator for the Rho-type GTPases by converting them to an inactive GDP-bound state. This chain is Rho GTPase-activating protein 40, found in Homo sapiens (Human).